A 1441-amino-acid chain; its full sequence is Probable ubiquitin-conjugating enzyme E2 R521 (1441 aa).

Residues 20–40 traverse the membrane as a helical segment; that stretch reads YIHHIIINYITNSILYFFLIM. Residues 63-89 are a coiled coil; that stretch reads NQSKLVNTLDIIKDEINKWEEKNTDKD. The span at 180 to 199 shows a compositional bias: basic and acidic residues; it reads VSKDKMKDKSESNSEHEQES. 2 disordered regions span residues 180–207 and 283–305; these read VSKD…SNEI and IFGK…MSKV. Residues 286–303 show a composition bias toward low complexity; the sequence is KSKNSGPSSSKTSISSMS. Residues 340–368 are a coiled coil; that stretch reads TTNEDNNDLDNLINEVERLVQETKDQETK. A compositionally biased stretch (low complexity) spans 505–538; sequence TVEPVQEVAEEPVQQEVAEEPVQQEVAEEPVQQE. Disordered stretches follow at residues 505 to 554 and 577 to 605; these read TVEP…PVQK and NDFS…NNLG. A compositionally biased stretch (acidic residues) spans 539 to 549; the sequence is VAEEPVQEVAE. Positions 1217 to 1380 constitute a UBC core domain; that stretch reads AISRELLSHS…VRFNCMKWAM (164 aa). The active-site Glycyl thioester intermediate is Cys-1306.

Belongs to the ubiquitin-conjugating enzyme family.

It is found in the membrane. It catalyses the reaction S-ubiquitinyl-[E1 ubiquitin-activating enzyme]-L-cysteine + [E2 ubiquitin-conjugating enzyme]-L-cysteine = [E1 ubiquitin-activating enzyme]-L-cysteine + S-ubiquitinyl-[E2 ubiquitin-conjugating enzyme]-L-cysteine.. It functions in the pathway protein modification; protein ubiquitination. Functionally, catalyzes the covalent attachment of ubiquitin to other proteins. In Acanthamoeba polyphaga (Amoeba), this protein is Probable ubiquitin-conjugating enzyme E2 R521.